The following is a 292-amino-acid chain: MFNRIFLFLLTNVAVLMLAGVVMSVLGVNPAQMSGLLVMAAIFGFGGSFISLLLSKFMAKRSTGAQVITEPRTPTERWLLETVRRQAQAAGIGMPEVAVYDGPEINAFATGANRNNALVAVSTGLLQHMDQDEAEAVLGHEIAHVANGDMVTMALLQGVLNTFVIVLARVVGGIIDSAVSGNRDSGRGFAYYIIVFALEMVFGMFATMIAMWFSRRREFRADAGGAQLAGRSKMIAALERLSLNHGQNTLPSQVQAFGISGGVGDGLRRLFLSHPPLTERIAALRAANGTAM.

2 helical membrane-spanning segments follow: residues I5–V25 and S34–L54. H140 is a Zn(2+) binding site. The active site involves E141. H144 is a Zn(2+) binding site. 2 consecutive transmembrane segments (helical) span residues L155–I175 and I193–F213. Zn(2+) is bound at residue E218.

It belongs to the peptidase M48B family. The cofactor is Zn(2+).

Its subcellular location is the cell inner membrane. This Xanthomonas oryzae pv. oryzae (strain PXO99A) protein is Protease HtpX.